We begin with the raw amino-acid sequence, 799 residues long: LPS-assembly protein LptD (799 aa).

Positions 1–34 are cleaved as a signal peptide; sequence MMHELDLRPHLARFAQRPLALLAWALLQGTSVNA.

This sequence belongs to the LptD family. Component of the lipopolysaccharide transport and assembly complex. Interacts with LptE and LptA.

It localises to the cell outer membrane. Functionally, together with LptE, is involved in the assembly of lipopolysaccharide (LPS) at the surface of the outer membrane. This Albidiferax ferrireducens (strain ATCC BAA-621 / DSM 15236 / T118) (Rhodoferax ferrireducens) protein is LPS-assembly protein LptD.